The following is a 119-amino-acid chain: Beta-2-microglobulin (119 aa).

Positions Met-1–Ala-20 are cleaved as a signal peptide. In terms of domain architecture, Ig-like C1-type spans Pro-25 to Lys-114.

This sequence belongs to the beta-2-microglobulin family. In terms of assembly, heterodimer of an alpha chain and a beta chain. Beta-2-microglobulin is the beta-chain of major histocompatibility complex class I molecules.

Its subcellular location is the secreted. Component of the class I major histocompatibility complex (MHC). Involved in the presentation of peptide antigens to the immune system. The chain is Beta-2-microglobulin (B2M) from Brachyteles arachnoides (Southern muriqui).